The primary structure comprises 428 residues: Probable dual-specificity RNA methyltransferase RlmN 2 (428 aa).

Residue Glu142 is the Proton acceptor of the active site. Residues 148 to 414 (FAGRATACVS…STVRQRRGID (267 aa)) form the Radical SAM core domain. A disulfide bond links Cys155 and Cys419. [4Fe-4S] cluster-binding residues include Cys162, Cys166, and Cys169. Basic and acidic residues predominate over residues 207–228 (MRDPSPGREAGEKSRDEADRHR). The disordered stretch occupies residues 207–232 (MRDPSPGREAGEKSRDEADRHRAPPT). Residues 244 to 245 (GE), Ser276, 299 to 301 (SLH), and Asn375 contribute to the S-adenosyl-L-methionine site. Cys419 acts as the S-methylcysteine intermediate in catalysis.

It belongs to the radical SAM superfamily. RlmN family. Requires [4Fe-4S] cluster as cofactor.

The protein resides in the cytoplasm. It catalyses the reaction adenosine(2503) in 23S rRNA + 2 reduced [2Fe-2S]-[ferredoxin] + 2 S-adenosyl-L-methionine = 2-methyladenosine(2503) in 23S rRNA + 5'-deoxyadenosine + L-methionine + 2 oxidized [2Fe-2S]-[ferredoxin] + S-adenosyl-L-homocysteine. The catalysed reaction is adenosine(37) in tRNA + 2 reduced [2Fe-2S]-[ferredoxin] + 2 S-adenosyl-L-methionine = 2-methyladenosine(37) in tRNA + 5'-deoxyadenosine + L-methionine + 2 oxidized [2Fe-2S]-[ferredoxin] + S-adenosyl-L-homocysteine. Its function is as follows. Specifically methylates position 2 of adenine 2503 in 23S rRNA and position 2 of adenine 37 in tRNAs. This Opitutus terrae (strain DSM 11246 / JCM 15787 / PB90-1) protein is Probable dual-specificity RNA methyltransferase RlmN 2.